Consider the following 82-residue polypeptide: Small ribosomal subunit protein bS16 (82 aa).

This sequence belongs to the bacterial ribosomal protein bS16 family.

This Mannheimia succiniciproducens (strain KCTC 0769BP / MBEL55E) protein is Small ribosomal subunit protein bS16.